Reading from the N-terminus, the 206-residue chain is Protein GrpE (206 aa).

Basic and acidic residues predominate over residues 1-17 (MSNESIKAEQDLIHEGV). Positions 1–20 (MSNESIKAEQDLIHEGVESE) are disordered.

Belongs to the GrpE family. As to quaternary structure, homodimer.

It is found in the cytoplasm. Its function is as follows. Participates actively in the response to hyperosmotic and heat shock by preventing the aggregation of stress-denatured proteins, in association with DnaK and GrpE. It is the nucleotide exchange factor for DnaK and may function as a thermosensor. Unfolded proteins bind initially to DnaJ; upon interaction with the DnaJ-bound protein, DnaK hydrolyzes its bound ATP, resulting in the formation of a stable complex. GrpE releases ADP from DnaK; ATP binding to DnaK triggers the release of the substrate protein, thus completing the reaction cycle. Several rounds of ATP-dependent interactions between DnaJ, DnaK and GrpE are required for fully efficient folding. The chain is Protein GrpE from Shewanella oneidensis (strain ATCC 700550 / JCM 31522 / CIP 106686 / LMG 19005 / NCIMB 14063 / MR-1).